A 1807-amino-acid polypeptide reads, in one-letter code: Phospholipase D (1807 aa).

The tract at residues 1 to 28 (MPGPDDDVREPTAAARTNNSGYGLRAAP) is disordered. The next 3 helical transmembrane spans lie at 257 to 277 (IAFVSAIVGFIFPICLVIVTS), 305 to 325 (AGVFLGLAVLGGILFFAVFVY), and 587 to 607 (VYYILFLFAGGIIAPVVGFLA). The segment at 697–734 (TASRMGTGNLAPASSRVDSSTQSEDSFEAPKPPPSSVS) is disordered. PLD phosphodiesterase domains lie at 853 to 880 (GFWSHHEKIVCIDQSLAFVGGLDLCFGR) and 1249 to 1276 (EQIYIHSKLMIADDRCAILGSANINDRS). Active-site residues include His858, Lys860, Asp865, His1254, Lys1256, and Asp1261. Composition is skewed to polar residues over residues 1531–1547 (FSRSNSVSTPTNFSQLD), 1568–1578 (YNSNSMPSNAS), and 1597–1614 (YPNSPSVASFQHTPQSPA). The tract at residues 1531 to 1621 (FSRSNSVSTP…SPAIATGARS (91 aa)) is disordered.

Belongs to the phospholipase D family. TM-PLD subfamily.

It is found in the membrane. The catalysed reaction is a 1,2-diacyl-sn-glycero-3-phosphocholine + H2O = a 1,2-diacyl-sn-glycero-3-phosphate + choline + H(+). Hydrolyzes glycerol-phospholipids at the terminal phosphodiesteric bond. This is Phospholipase D from Phytophthora infestans (Potato late blight agent).